Reading from the N-terminus, the 426-residue chain is Deoxyguanosinetriphosphate triphosphohydrolase-like protein (426 aa).

Positions Met-1–Ala-23 are disordered. The 151-residue stretch at Arg-67 to Ser-217 folds into the HD domain.

It belongs to the dGTPase family. Type 2 subfamily.

The sequence is that of Deoxyguanosinetriphosphate triphosphohydrolase-like protein from Corynebacterium efficiens (strain DSM 44549 / YS-314 / AJ 12310 / JCM 11189 / NBRC 100395).